Consider the following 128-residue polypeptide: MIVRTLDECRNSERRVVSDNWESVRMLLKDDNMGFSFHITTIYEGTETHIHYQNHLESVFCMSGEGEIEVVGGETYPIKPGTLYILDKNDEHYLRAYKNKEMVMACVFNPPITGAEVHDENGVYPLVD.

It belongs to the ectoine synthase family.

It catalyses the reaction (2S)-4-acetamido-2-aminobutanoate = L-ectoine + H2O. Its pathway is amine and polyamine biosynthesis; ectoine biosynthesis; L-ectoine from L-aspartate 4-semialdehyde: step 3/3. Its function is as follows. Catalyzes the circularization of gamma-N-acetyl-alpha,gamma-diaminobutyric acid (ADABA) to ectoine (1,4,5,6-tetrahydro-2-methyl-4-pyrimidine carboxylic acid), which is an excellent osmoprotectant. In Vibrio campbellii (strain ATCC BAA-1116), this protein is L-ectoine synthase.